The primary structure comprises 261 residues: Shikimate dehydrogenase (NADP(+)) (261 aa).

Residues Ser13 to Ser15 and Thr60 contribute to the shikimate site. Lys64 acts as the Proton acceptor in catalysis. Glu76 provides a ligand contact to NADP(+). Residues Asn85 and Asp100 each coordinate shikimate. NADP(+) contacts are provided by residues Gly122–Ala126, Asn143–Arg148, and Ile203. Tyr205 contacts shikimate. An NADP(+)-binding site is contributed by Gly226.

It belongs to the shikimate dehydrogenase family. Homodimer.

The enzyme catalyses shikimate + NADP(+) = 3-dehydroshikimate + NADPH + H(+). Its pathway is metabolic intermediate biosynthesis; chorismate biosynthesis; chorismate from D-erythrose 4-phosphate and phosphoenolpyruvate: step 4/7. Functionally, involved in the biosynthesis of the chorismate, which leads to the biosynthesis of aromatic amino acids. Catalyzes the reversible NADPH linked reduction of 3-dehydroshikimate (DHSA) to yield shikimate (SA). In Exiguobacterium sp. (strain ATCC BAA-1283 / AT1b), this protein is Shikimate dehydrogenase (NADP(+)).